A 201-amino-acid polypeptide reads, in one-letter code: Segregation and condensation protein B (201 aa).

Belongs to the ScpB family. Homodimer. Homodimerization may be required to stabilize the binding of ScpA to the Smc head domains. Component of a cohesin-like complex composed of ScpA, ScpB and the Smc homodimer, in which ScpA and ScpB bind to the head domain of Smc. The presence of the three proteins is required for the association of the complex with DNA.

It is found in the cytoplasm. Participates in chromosomal partition during cell division. May act via the formation of a condensin-like complex containing Smc and ScpA that pull DNA away from mid-cell into both cell halves. The polypeptide is Segregation and condensation protein B (Enterococcus faecalis (strain ATCC 700802 / V583)).